Here is a 299-residue protein sequence, read N- to C-terminus: Protease HtpX homolog (299 aa).

The next 2 helical transmembrane spans lie at 15 to 35 (ILLLVFFLLLALVGYAVGYLF) and 39 to 59 (GLGGLVIALIIGFIYALSMIF). His-143 is a binding site for Zn(2+). Glu-144 is an active-site residue. His-147 is a Zn(2+) binding site. 2 helical membrane passes run 158 to 178 (IAVALASAITMLSSMAGRMMW) and 198 to 218 (IIMLVVSLLAIVLAPLAATLV). Glu-227 serves as a coordination point for Zn(2+).

Belongs to the peptidase M48B family. Zn(2+) is required as a cofactor.

The protein localises to the cell membrane. In Streptococcus pneumoniae serotype 19F (strain G54), this protein is Protease HtpX homolog.